Reading from the N-terminus, the 503-residue chain is Protein phosphatase eya-1 (503 aa).

Asp-237 serves as the catalytic Nucleophile. Positions 237 and 239 each coordinate Mg(2+). The active-site Proton donor is the Asp-239.

Belongs to the HAD-like hydrolase superfamily. EYA family. Interacts (via C-terminus) with ceh-34 (via N-terminus). Requires Mg(2+) as cofactor. As to expression, expressed in body wall muscles. Expressed in BAG sensory neurons and in other head neurons.

The protein resides in the nucleus. The catalysed reaction is O-phospho-L-tyrosyl-[protein] + H2O = L-tyrosyl-[protein] + phosphate. In terms of biological role, tyrosine protein phosphatase. Acts probably as a transcription regulator in the embryonic and postembryonic development of several tissues including pharynx, vulva and gonads. Required for the development of anterior tissues during late embryogenesis. Together with ceh-34, required to specify the coelomocyte fate in embryonic and postembryonic precursors. In the anterior part of the embryo, prevents apoptosis in cells that are not fated to die. Together with ceh-34 activates proapoptotic factor egl-1 expression to promote motor neuron M4 sister cell apoptosis. Also promotes apoptosis of I1 pharyngeal neuron sister cell. Plays a role in locomotion and fertility. May play a role in resistance to heat and oxidative stresses. May cooperate with the transcription factors vab-3 and ceh-32 to repress transcription factor ets-5 expression in non BAG neuronal cells. The polypeptide is Protein phosphatase eya-1 (Caenorhabditis elegans).